A 3014-amino-acid chain; its full sequence is Genome polyprotein (3014 aa).

S2 bears the N-acetylserine; by host mark. The segment at 2–23 (STNPKPQRKTKRNTNRRPQDVK) is interaction with STAT1. The interaction with EIF2AK2/PKR stretch occupies residues 2 to 58 (STNPKPQRKTKRNTNRRPQDVKFPGGGQIVGGVYLLPRRGPRLGVRATRKTSERSQP). The tract at residues 2-59 (STNPKPQRKTKRNTNRRPQDVKFPGGGQIVGGVYLLPRRGPRLGVRATRKTSERSQPR) is interaction with DDX3X. Residues 2–75 (STNPKPQRKT…PKARQPTGRS (74 aa)) form a disordered region. Topologically, residues 2–168 (STNPKPQRKT…EDGVNYATGN (167 aa)) are cytoplasmic. 2 consecutive short sequence motifs (nuclear localization signal) follow at residues 5 to 13 (PKPQRKTKR) and 38 to 43 (PRRGPR). The segment covering 7–16 (PQRKTKRNTN) has biased composition (basic residues). Residues 32–47 (GGVYLLPRRGPRLGVR) show a composition bias toward low complexity. S53 bears the Phosphoserine; by host mark. Short sequence motifs (nuclear localization signal) lie at residues 58-64 (PRGRRQP) and 66-71 (PKARQP). 2 positions are modified to phosphoserine; by host: S99 and S116. Residues 112–152 (PRRKSRNLGKVIDTLTCGFADLMGYIPLVGGPVGGVARALA) are important for endoplasmic reticulum and mitochondrial localization. Residues 122–173 (VIDTLTCGFADLMGYIPLVGGPVGGVARALAHGVRVLEDGVNYATGNLPGCS) form an interaction with APOA2 region. Residues 164-167 (YATG) form an important for lipid droplets localization region. A helical membrane pass occupies residues 169-189 (LPGCSFSIFILALLSCLTVPT). Residues 178–191 (ILALLSCLTVPTSA) constitute a propeptide, ER anchor for the core protein, removed in mature form by host signal peptidase. Over 190 to 358 (SAVPYRNASG…AGAHWGVLFA (169 aa)) the chain is Lumenal. N-linked (GlcNAc...) asparagine; by host glycosylation is found at N196, N209, and N234. Residues 265-296 (LAGGAALCSALYVGDACGAVFLVGQMFTYSPR) form an important for fusion region. N305 carries an N-linked (GlcNAc...) asparagine; by host glycan. A helical transmembrane segment spans residues 359–379 (AAYYASAANWAKVVLVLFLFA). Topologically, residues 380–726 (GVDANTRTVG…WEYIVLAFLL (347 aa)) are lumenal. An HVR1 region spans residues 385-412 (TRTVGGSAAQGARGLASLFTPGPQQNLQ). N-linked (GlcNAc...) (high mannose) asparagine; by host glycosylation is found at N417, N423, and N430. 4 disulfides stabilise this stretch: C429/C553, C452/C459, C487/C495, and C504/C509. N448 is a glycosylation site (N-linked (GlcNAc...) asparagine; by host). Positions 475–479 (AAVSG) are HVR2. Residues 481–494 (SDDKPYCWHYPPRP) form a CD81-binding 1 region. N-linked (GlcNAc...) asparagine; by host glycosylation is present at N533. Residues 545 to 552 (PPTGNWFG) are CD81-binding 2. N557 is a glycosylation site (N-linked (GlcNAc...) asparagine; by host). C565 and C570 are oxidised to a cystine. N578 carries an N-linked (GlcNAc...) asparagine; by host glycan. 3 disulfide bridges follow: C582–C586, C598–C621, and C608–C645. N-linked (GlcNAc...) (high mannose) asparagine; by host glycosylation is found at N624 and N646. C653 and C678 are disulfide-bonded. A PKR/eIF2-alpha phosphorylation homology domain (PePHD) region spans residues 661–672 (AELSPLLHTTTQ). A helical transmembrane segment spans residues 727-747 (LADARICTCLWIMLLVCQAEA). Over 748–758 (ALENVIVLNAA) the chain is Lumenal. Residues 759–779 (AAAGTHGFFWGLLVICFAWHF) form a helical membrane-spanning segment. The Cytoplasmic portion of the chain corresponds to 780–783 (KGRL). Residues 784 to 804 (VPGATYLCLGIWPLLLLLFLL) traverse the membrane as a helical segment. At 805 to 814 (PQRALALDSS) the chain is on the lumenal side. The helical transmembrane segment at 815 to 835 (DGGTVGCLVLTILTIFTLTPG) threads the bilayer. Residues 836 to 882 (YKKMVVLVIWWLQYFIARVEAFIHVWVPPLQVRGGRDAIIMLTCLFH) lie on the Cytoplasmic side of the membrane. A helical transmembrane segment spans residues 883–903 (PALGFEVTKILLGILGPLYLL). Residues 904–929 (QYSLIKLPYFIRARALLRACLLAKHL) lie on the Lumenal side of the membrane. The Peptidase C18 domain maps to 904–1027 (QYSLIKLPYF…DIREAGWRLL (124 aa)). Residues 905 to 1207 (YSLIKLPYFI…PVENLETTMR (303 aa)) form a protease NS2-3 region. The S-palmitoyl cysteine; by host moiety is linked to residue C923. The helical transmembrane segment at 930-950 (ACGRYVQAALLHLGRLTGTYI) threads the bilayer. An interaction with host SCPS1 region spans residues 930–950 (ACGRYVQAALLHLGRLTGTYI). The Cytoplasmic segment spans residues 951-1658 (YDHLAPMKDW…CMSADLEVIT (708 aa)). Catalysis depends on for protease NS2 activity; shared with dimeric partner residues H953, E973, and C994. The Peptidase S29 domain maps to 1028–1209 (APITAYAQQT…ENLETTMRSP (182 aa)). Active-site charge relay system; for serine protease NS3 activity residues include H1084 and D1108. Zn(2+) contacts are provided by C1124 and C1126. The active-site Charge relay system; for serine protease NS3 activity is S1166. Residues C1172 and H1176 each contribute to the Zn(2+) site. A Helicase ATP-binding domain is found at 1218–1370 (PAVPHEFQVG…PNIEEVALPS (153 aa)). 1231 to 1238 (APTGSGKS) lines the ATP pocket. Mg(2+) is bound by residues S1238 and E1318. Positions 1317–1320 (DECH) match the DECH box motif. The segment at 1487–1499 (QRRGRTGRGRHGI) is RNA-binding. A helical transmembrane segment spans residues 1659 to 1679 (STWVLVGGVVAALAAYCLTVG). Positions 1680-1691 (SVAIVGRIILSG) are NS3-binding. Over 1680–1806 (SVAIVGRIIL…AVTSPLTTQQ (127 aa)) the chain is Cytoplasmic. A helical membrane pass occupies residues 1807-1827 (TLLFNILGGWVASQIAPPTAA). At 1828–1829 (TA) the chain is on the lumenal side. A helical membrane pass occupies residues 1830–1850 (FVVSGMAGAAVGSIGLGRVLI). A topological domain (cytoplasmic) is located at residue D1851. Residues 1852–1872 (ILAGYGAGVAGALVAFKIMCG) traverse the membrane as a helical segment. Over 1873-1882 (EKPTAEDLVN) the chain is Lumenal. A helical membrane pass occupies residues 1883–1903 (LLPSILCPGALVVGVICAAVL). The Cytoplasmic segment spans residues 1904-1973 (RRHIGPGEGA…WIGEDYSTPC (70 aa)). A lipid anchor (S-palmitoyl cysteine; by host) is attached at C1973. An intramembrane segment occupies 1974–2003 (DGTWLRAIWDWVCTALTDFKAWLQAKLLPQ). At 2004-2993 (LPGVPFLSCQ…YHSMSRARPR (990 aa)) the chain is on the cytoplasmic side. 4 residues coordinate Zn(2+): C2012, C2030, C2032, and C2053. The FKBP8-binding stretch occupies residues 2121–2209 (EFFTELDGVR…ASSSASQLSA (89 aa)). The tract at residues 2121 to 2334 (EFFTELDGVR…VPPPRRKRKP (214 aa)) is transcriptional activation. The interaction with non-structural protein 4A stretch occupies residues 2136-2140 (PPCNP). Disordered stretches follow at residues 2187 to 2219 (AKRR…CTTQ), 2301 to 2337 (TWKQ…PVVL), and 2358 to 2413 (TQSI…SWST). Residues 2190–2441 (RLDRGSPPSL…ALITPCSAEE (252 aa)) form an interaction with host SKP2 region. 6 positions are modified to phosphoserine; by host: S2195, S2198, S2202, S2205, S2208, and S2211. The segment covering 2195-2212 (SPPSLASSSASQLSAPSL) has biased composition (low complexity). Residues 2211-2250 (SLKATCTTQGHHPDADLIEANLLWRQCMGGNITRVEAENK) are ISDR. The interval 2211 to 2276 (SLKATCTTQG…REISVSADCF (66 aa)) is interaction with EIF2AK2/PKR. An NS4B-binding region spans residues 2250–2307 (KVVILDSFEPLKADDDDREISVSADCFRRGPAFPPALPIWARPGYDPPLLETWKQPDY). Residues 2300 to 2378 (ETWKQPDYDP…GTSSQPDSGP (79 aa)) form a V3 region. Positions 2316–2327 (PLPPAGLPPVPP) are enriched in pro residues. The SH3-binding signature appears at 2323 to 2326 (PPVP). The Nuclear localization signal motif lies at 2328 to 2337 (PRRKRKPVVL). Residues 2358 to 2375 (TQSIEGQDSAVGTSSQPD) show a composition bias toward polar residues. S2465 carries the phosphoserine; by host modification. The RdRp catalytic domain occupies 2637-2755 (PMAFSYDTRC…ICESQGTHED (119 aa)). Mg(2+) contacts are provided by D2643, D2741, and D2742. Residues 2994 to 3014 (CILLCLLLLTVGVGIFLLPAR) form a helical membrane-spanning segment.

This sequence belongs to the hepacivirus polyprotein family. In terms of assembly, homooligomer. Interacts with E1 (via C-terminus). Interacts with the non-structural protein 5A. Interacts (via N-terminus) with host STAT1 (via SH2 domain); this interaction results in decreased STAT1 phosphorylation and ubiquitin-mediated proteasome-dependent STAT1 degradation, leading to decreased IFN-stimulated gene transcription. Interacts with host STAT3; this interaction constitutively activates STAT3. Interacts with host LTBR receptor. Interacts with host TNFRSF1A receptor and possibly induces apoptosis. Interacts with host HNRPK. Interacts with host YWHAE. Interacts with host UBE3A/E6AP. Interacts with host DDX3X. Interacts with host APOA2. Interacts with host RXRA protein. Interacts with host SP110 isoform 3/Sp110b; this interaction sequesters the transcriptional corepressor SP110 away from the nucleus. Interacts with host CREB3 nuclear transcription protein; this interaction triggers cell transformation. Interacts with host ACY3. Interacts with host C1QR1. Interacts with host RBM24; this interaction, which enhances the interaction of the mature core protein with 5'-UTR, may inhibit viral translation and favor replication. Interacts with host EIF2AK2/PKR; this interaction induces the autophosphorylation of EIF2AK2. Part of the viral assembly initiation complex composed of NS2, E1, E2, NS3, NS4A, NS5A and the mature core protein. As to quaternary structure, forms a heterodimer with envelope glycoprotein E2. Interacts with mature core protein. Interacts with protease NS2. The heterodimer E1/E2 interacts with host CLDN1; this interaction plays a role in viral entry into host cell. Interacts with host SPSB2 (via C-terminus). Part of the viral assembly initiation complex composed of NS2, E1, E2, NS3, NS4A, NS5A and the mature core protein. Interacts with host NEURL3; this interaction prevents E1 binding to glycoprotein E2. Forms a heterodimer with envelope glycoprotein E1. Interacts with host CD81 and SCARB1 receptors; these interactions play a role in viral entry into host cell. Interacts with host EIF2AK2/PKR; this interaction inhibits EIF2AK2 and probably allows the virus to evade the innate immune response. Interacts with host CD209/DC-SIGN and CLEC4M/DC-SIGNR. Interact with host SPCS1; this interaction is essential for viral particle assembly. Interacts with protease NS2. The heterodimer E1/E2 interacts with host CLDN1; this interaction plays a role in viral entry into host cell. Part of the viral assembly initiation complex composed of NS2, E1, E2, NS3, NS4A, NS5A and the mature core protein. Interacts with host SLC3A2/4F2hc; the interaction may facilitate viral entry into host cell. Interacts with human PLSCR1. In terms of assembly, homohexamer. Homoheptamer. Interacts with protease NS2. As to quaternary structure, homodimer. Interacts with host SPCS1; this interaction is essential for viral particle assembly. Interacts with envelope glycoprotein E1. Interacts with envelope glycoprotein E2. Interacts with viroporin p7. Interacts with serine protease/helicase NS3. Part of the replication complex composed of NS2, NS3, NS4A, NS4B, NS5A and the RNA-directed RNA polymerase embedded in an ER-derived membranous web. Part of the viral assembly initiation complex composed of NS2, E1, E2, NS3, NS4A, NS5A and the mature core protein. Interacts with protease NS2. Interacts with non-structural protein 4A; this interaction stabilizes the folding of NS3 serine protease. NS3-NS4A interaction is essential for NS3 activation and allows membrane anchorage of the latter. NS3/NS4A complex also prevents phosphorylation of host IRF3, thus preventing the establishment of dsRNA induced antiviral state. Interacts with host MAVS; this interaction leads to the cleavage and inhibition of host MAVS. Interacts with host TICAM1; this interaction leads to the cleavage and inhibition of host TICAM1. Interacts with host TANK-binding kinase/TBK1; this interaction results in the inhibition of the association between TBK1 and IRF3, which leads to the inhibition of IRF3 activation. Interacts with host RBM24. Part of the replication complex composed of NS2, NS3, NS4A, NS4B, NS5A and the RNA-directed RNA polymerase embedded in an ER-derived membranous web. Part of the viral assembly initiation complex composed of NS2, E1, E2, NS3, NS4A, NS5A and the mature core protein. In terms of assembly, interacts with NS3 serine protease; this interaction stabilizes the folding of NS3 serine protease. NS3-NS4A interaction is essential for NS3 activation and allows membrane anchorage of the latter. Interacts with non-structural protein 5A (via N-terminus). Part of the replication complex composed of NS2, NS3, NS4A, NS4B, NS5A and the RNA-directed RNA polymerase embedded in an ER-derived membranous web. Part of the viral assembly initiation complex composed of NS2, E1, E2, NS3, NS4A, NS5A and the mature core protein. As to quaternary structure, homomultimer. Interacts with non-structural protein NS5A. Interacts with host PLA2G4C; this interaction likely initiates the recruitment of replication complexes to lipid droplets. Interacts with host STING; this interaction disrupts the interaction between STING and TBK1 thereby suppressing the interferon signaling. Part of the replication complex composed of NS2, NS3, NS4A, NS4B, NS5A and the RNA-directed RNA polymerase embedded in an ER-derived membranous web. Monomer. Homodimer; dimerization is required for RNA-binding. Interacts with the mature core protein. Interacts (via N-terminus) with non-structural protein 4A. Interacts with non-structural protein 4B. Interacts (via region D2) with RNA-directed RNA polymerase. Part of the viral assembly initiation complex composed of NS2, E1, E2, NS3, NS4A, NS5A and the mature core protein. Part of the replication complex composed of NS2, NS3, NS4A, NS4B, NS5A and the RNA-directed RNA polymerase embedded in an ER-derived membranous web. Interacts with host GRB2. Interacts with host BIN1. Interacts with host PIK3R1. Interacts with host SRCAP. Interacts with host FKBP8. Interacts (via C-terminus) with host VAPB (via MSP domain). Interacts with host EIF2AK2/PKR; this interaction leads to disruption of EIF2AK2 dimerization by NS5A and probably allows the virus to evade the innate immune response. Interacts (via N-terminus) with host PACSIN2 (via N-terminus); this interaction attenuates protein kinase C alpha-mediated phosphorylation of PACSIN2 by disrupting the interaction between PACSIN2 and PRKCA. Interacts (via N-terminus) with host SRC kinase (via SH2 domain). Interacts with most Src-family kinases. Interacts with host IFI27 and SKP2; promotes the ubiquitin-mediated proteasomal degradation of NS5A. Interacts with host GPS2. Interacts with host TNFRSF21; this interaction allows the modulation by the virus of JNK, p38 MAPK, STAT3, and Akt signaling pathways in a DR6-dependent manner. Interacts (via N-terminus) with host CIDEB (via N-terminus); this interaction seems to regulate the association of HCV particles with APOE. Interacts with host CHKA/Choline Kinase-alpha; CHKA bridges host PI4KA and NS5A and potentiates NS5A-stimulated PI4KA activity, which then facilitates the targeting of the ternary complex to the ER for viral replication. Interacts with host SPSB2 (via C-terminus); this interaction targets NS5A for ubiquitination and degradation. Interacts with host RAB18; this interaction may promote the association of NS5A and other replicase components with lipid droplets. Interacts (via region D2) with host PPIA/CYPA; the interaction stimulates RNA-binding ability of NS5A and is dependent on the peptidyl-prolyl cis-trans isomerase activity of PPIA/CYPA. Interacts with host TRIM14; this interaction induces the degradation of NS5A. In terms of assembly, homooligomer. Interacts with non-structural protein 5A. Interacts with host VAPB. Interacts with host PRK2/PKN2. Interacts with host HNRNPA1 and SEPT6; these interactions facilitate viral replication. Part of the replication complex composed of NS2, NS3, NS4A, NS4B, NS5A and the RNA-directed RNA polymerase. Zn(2+) serves as cofactor. Requires Mg(2+) as cofactor. Specific enzymatic cleavages in vivo yield mature proteins. The structural proteins, core, E1, E2 and p7 are produced by proteolytic processing by host signal peptidases. The core protein precursor is synthesized as a 23 kDa, which is retained in the ER membrane through the hydrophobic signal peptide. Cleavage by the signal peptidase releases the 21 kDa mature core protein. The cleavage of the core protein precursor occurs between aminoacids 176 and 188 but the exact cleavage site is not known. Some degraded forms of the core protein appear as well during the course of infection. The other proteins (p7, NS2, NS3, NS4A, NS4B, NS5A and NS5B) are cleaved by the viral proteases. Autoprocessing between NS2 and NS3 is mediated by the NS2 cysteine protease catalytic domain and regulated by the NS3 N-terminal domain. In terms of processing, phosphorylated by host PKC and PKA. Post-translationally, ubiquitinated; mediated by UBE3A and leading to core protein subsequent proteasomal degradation. Highly N-glycosylated. In terms of processing, palmitoylation is required for NS2/3 autoprocessing and E2 recruitment to membranes. Post-translationally, palmitoylated. This modification may play a role in its polymerization or in protein-protein interactions. Phosphorylated on serines in a basal form termed p56. p58 is a hyperphosphorylated form of p56. p56 and p58 coexist in the cell in roughly equivalent amounts. Hyperphosphorylation is dependent on the presence of NS4A. Host CSNK1A1/CKI-alpha or RPS6KB1 kinases may be responsible for NS5A phosphorylation. In terms of processing, tyrosine phosphorylation is essential for the interaction with host SRC. Post-translationally, the N-terminus is phosphorylated by host PRK2/PKN2.

It is found in the host endoplasmic reticulum membrane. The protein localises to the host mitochondrion membrane. Its subcellular location is the virion. It localises to the host cytoplasm. The protein resides in the host nucleus. It is found in the host lipid droplet. The protein localises to the virion membrane. Its subcellular location is the host mitochondrion. It localises to the host cell membrane. The protein resides in the host perinuclear region. The enzyme catalyses Hydrolysis of four peptide bonds in the viral precursor polyprotein, commonly with Asp or Glu in the P6 position, Cys or Thr in P1 and Ser or Ala in P1'.. The catalysed reaction is a ribonucleoside 5'-triphosphate + H2O = a ribonucleoside 5'-diphosphate + phosphate + H(+). It catalyses the reaction ATP + H2O = ADP + phosphate + H(+). It carries out the reaction RNA(n) + a ribonucleoside 5'-triphosphate = RNA(n+1) + diphosphate. Its activity is regulated as follows. Inhibited by the antiviral drug hexamethylene amiloride. Inhibition by amantadine appears to be genotype-dependent. Also inhibited by long-alkyl-chain iminosugar derivatives. With respect to regulation, activity is up-regulated by PRK2/PKN2-mediated phosphorylation. Functionally, packages viral RNA to form a viral nucleocapsid, and promotes virion budding. Participates in the viral particle production as a result of its interaction with the non-structural protein 5A. Binds RNA and may function as a RNA chaperone to induce the RNA structural rearrangements taking place during virus replication. Modulates viral translation initiation by interacting with viral IRES and 40S ribosomal subunit. Affects various cell signaling pathways, host immunity and lipid metabolism. Prevents the establishment of cellular antiviral state by blocking the interferon-alpha/beta (IFN-alpha/beta) and IFN-gamma signaling pathways and by blocking the formation of phosphorylated STAT1 and promoting ubiquitin-mediated proteasome-dependent degradation of STAT1. Activates STAT3 leading to cellular transformation. Regulates the activity of cellular genes, including c-myc and c-fos. May repress the promoter of p53, and sequester CREB3 and SP110 isoform 3/Sp110b in the cytoplasm. Represses cell cycle negative regulating factor CDKN1A, thereby interrupting an important check point of normal cell cycle regulation. Targets transcription factors involved in the regulation of inflammatory responses and in the immune response: suppresses TNF-induced NF-kappa-B activation, and activates AP-1. Binds to dendritic cells (DCs) via C1QR1, resulting in down-regulation of T-lymphocytes proliferation. Alters lipid metabolism by interacting with hepatocellular proteins involved in lipid accumulation and storage. Induces up-regulation of FAS promoter activity, and thereby contributes to the increased triglyceride accumulation in hepatocytes (steatosis). In terms of biological role, forms a heterodimer with envelope glycoprotein E2, which mediates virus attachment to the host cell, virion internalization through clathrin-dependent endocytosis and fusion with host membrane. Fusion with the host cell is most likely mediated by both E1 and E2, through conformational rearrangements of the heterodimer required for fusion rather than a classical class II fusion mechanism. E1/E2 heterodimer binds host apolipoproteins such as APOB and ApoE thereby forming a lipo-viro-particle (LVP). APOE associated to the LVP allows the initial virus attachment to cell surface receptors such as the heparan sulfate proteoglycans (HSPGs), syndecan-1 (SDC1), syndecan-1 (SDC2), the low-density lipoprotein receptor (LDLR) and scavenger receptor class B type I (SCARB1). The cholesterol transfer activity of SCARB1 allows E2 exposure and binding of E2 to SCARB1 and the tetraspanin CD81. E1/E2 heterodimer binding on CD81 activates the epithelial growth factor receptor (EGFR) signaling pathway. Diffusion of the complex E1-E2-EGFR-SCARB1-CD81 to the cell lateral membrane allows further interaction with Claudin 1 (CLDN1) and occludin (OCLN) to finally trigger HCV entry. Its function is as follows. Forms a heterodimer with envelope glycoprotein E1, which mediates virus attachment to the host cell, virion internalization through clathrin-dependent endocytosis and fusion with host membrane. Fusion with the host cell is most likely mediated by both E1 and E2, through conformational rearrangements of the heterodimer required for fusion rather than a classical class II fusion mechanism. The interaction between envelope glycoprotein E2 and host apolipoprotein E/APOE allows the proper assembly, maturation and infectivity of the viral particles. This interaction is probably promoted via the up-regulation of cellular autophagy by the virus. E1/E2 heterodimer binds host apolipoproteins such as APOB and APOE thereby forming a lipo-viro-particle (LVP). APOE associated to the LVP allows the initial virus attachment to cell surface receptors such as the heparan sulfate proteoglycans (HSPGs), syndecan-1 (SDC1), syndecan-1 (SDC2), the low-density lipoprotein receptor (LDLR) and scavenger receptor class B type I (SCARB1). The cholesterol transfer activity of SCARB1 allows E2 exposure and binding of E2 to SCARB1 and the tetraspanin CD81. E1/E2 heterodimer binding on CD81 activates the epithelial growth factor receptor (EGFR) signaling pathway. Diffusion of the complex E1-E2-EGFR-SCARB1-CD81 to the cell lateral membrane allows further interaction with Claudin 1 (CLDN1) and occludin (OCLN) to finally trigger HCV entry. Inhibits host EIF2AK2/PKR activation, preventing the establishment of an antiviral state. Viral ligand for CD209/DC-SIGN and CLEC4M/DC-SIGNR, which are respectively found on dendritic cells (DCs), and on liver sinusoidal endothelial cells and macrophage-like cells of lymph node sinuses. These interactions allow the capture of circulating HCV particles by these cells and subsequent facilitated transmission to permissive cells such as hepatocytes and lymphocyte subpopulations. The interaction between E2 and host amino acid transporter complex formed by SLC3A2 and SLC7A5/LAT1 may facilitate viral entry into host cell. Ion channel protein that acts as a viroporin and plays an essential role in the assembly, envelopment and secretion of viral particles. Regulates the host cell secretory pathway, which induces the intracellular retention of viral glycoproteins and favors assembly of viral particles. Creates a pore in acidic organelles and releases Ca(2+) and H(+) in the cytoplasm of infected cells, leading to a productive viral infection. High levels of cytoplasmic Ca(2+) may trigger membrane trafficking and transport of viral ER-associated proteins to viroplasms, sites of viral genome replication. This ionic imbalance induces the assembly of the inflammasome complex, which triggers the maturation of pro-IL-1beta into IL-1beta through the action of caspase-1. Targets also host mitochondria and induces mitochondrial depolarization. In addition of its role as a viroporin, acts as a lipid raft adhesion factor. Functionally, cysteine protease required for the proteolytic auto-cleavage between the non-structural proteins NS2 and NS3. The N-terminus of NS3 is required for the function of NS2 protease (active region NS2-3). Promotes the initiation of viral particle assembly by mediating the interaction between structural and non-structural proteins. In terms of biological role, displays three enzymatic activities: serine protease with a chymotrypsin-like fold, NTPase and RNA helicase. NS3 serine protease, in association with NS4A, is responsible for the cleavages of NS3-NS4A, NS4A-NS4B, NS4B-NS5A and NS5A-NS5B. The NS3/NS4A complex prevents phosphorylation of host IRF3, thus preventing the establishment of dsRNA induced antiviral state. The NS3/NS4A complex induces host amino acid transporter component SLC3A2, thus contributing to HCV propagation. NS3 RNA helicase binds to RNA and unwinds both dsDNA and dsRNA in the 3' to 5' direction, and likely resolves RNA complicated stable secondary structures in the template strand. Binds a single ATP and catalyzes the unzipping of a single base pair of dsRNA. Inhibits host antiviral proteins TBK1 and IRF3 thereby preventing the establishment of an antiviral state. Cleaves host MAVS/CARDIF thereby preventing the establishment of an antiviral state. Cleaves host TICAM1/TRIF, thereby disrupting TLR3 signaling and preventing the establishment of an antiviral state. Its function is as follows. Peptide cofactor which forms a non-covalent complex with the N-terminal of NS3 serine protease. The NS3/NS4A complex prevents phosphorylation of host IRF3, thus preventing the establishment of dsRNA induced antiviral state. The NS3/NS4A complex induces host amino acid transporter component SLC3A2, thus contributing to HCV propagation. Induces a specific membrane alteration that serves as a scaffold for the virus replication complex. This membrane alteration gives rise to the so-called ER-derived membranous web that contains the replication complex. NS4B self-interaction contributes to its function in membranous web formation. Promotes host TRIF protein degradation in a CASP8-dependent manner thereby inhibiting host TLR3-mediated interferon signaling. Disrupts the interaction between STING and TBK1 contributing to the inhibition of interferon signaling. Functionally, phosphorylated protein that is indispensable for viral replication and assembly. Both hypo- and hyperphosphorylated states are required for the viral life cycle. The hyperphosphorylated form of NS5A is an inhibitor of viral replication. Involved in RNA-binding and especially in binding to the viral genome. Zinc is essential for RNA-binding. Participates in the viral particle production as a result of its interaction with the mature viral core protein. Its interaction with host VAPB may target the viral replication complex to vesicles. Down-regulates viral IRES translation initiation. Mediates interferon resistance, presumably by interacting with and inhibiting host EIF2AK2/PKR. Prevents BIN1-induced apoptosis. Acts as a transcriptional activator of some host genes important for viral replication when localized in the nucleus. Via the interaction with host PACSIN2, modulates lipid droplet formation in order to promote virion assembly. Modulates TNFRSF21/DR6 signaling pathway for viral propagation. In terms of biological role, RNA-dependent RNA polymerase that performs primer-template recognition and RNA synthesis during viral replication. Initiates RNA transcription/replication at a flavin adenine dinucleotide (FAD), resulting in a 5'- FAD cap on viral RNAs. In this way, recognition of viral 5' RNA by host pattern recognition receptors can be bypassed, thereby evading activation of antiviral pathways. The chain is Genome polyprotein from Hepatitis C virus genotype 5a (isolate SA13) (HCV).